The primary structure comprises 278 residues: Large ribosomal subunit protein uL2 (278 aa).

The segment covering 212–221 has biased composition (basic residues); that stretch reads NRWLGKRPHN. The segment at 212–278 is disordered; that stretch reads NRWLGKRPHN…ILSSRHNRKK (67 aa).

This sequence belongs to the universal ribosomal protein uL2 family. As to quaternary structure, part of the 50S ribosomal subunit. Forms a bridge to the 30S subunit in the 70S ribosome.

Its function is as follows. One of the primary rRNA binding proteins. Required for association of the 30S and 50S subunits to form the 70S ribosome, for tRNA binding and peptide bond formation. It has been suggested to have peptidyltransferase activity; this is somewhat controversial. Makes several contacts with the 16S rRNA in the 70S ribosome. The chain is Large ribosomal subunit protein uL2 from Methylorubrum populi (strain ATCC BAA-705 / NCIMB 13946 / BJ001) (Methylobacterium populi).